The following is a 292-amino-acid chain: Undecaprenyl-diphosphatase (292 aa).

Transmembrane regions (helical) follow at residues 1 to 21, 46 to 66, 90 to 110, 114 to 134, 192 to 212, 225 to 245, and 253 to 273; these read MSLV…FLPV, FVTI…RADI, LGWY…LLEH, ALGN…LLAA, FLLS…STVP, VVGT…LLAW, and VFVV…LSGV.

The protein belongs to the UppP family.

It localises to the cell inner membrane. It carries out the reaction di-trans,octa-cis-undecaprenyl diphosphate + H2O = di-trans,octa-cis-undecaprenyl phosphate + phosphate + H(+). Functionally, catalyzes the dephosphorylation of undecaprenyl diphosphate (UPP). Confers resistance to bacitracin. In Anaeromyxobacter sp. (strain K), this protein is Undecaprenyl-diphosphatase.